Reading from the N-terminus, the 275-residue chain is Light-independent protochlorophyllide reductase iron-sulfur ATP-binding protein (275 aa).

Residues 12-17 and lysine 41 contribute to the ATP site; that span reads GIGKST. Residue serine 16 participates in Mg(2+) binding. 2 residues coordinate [4Fe-4S] cluster: cysteine 97 and cysteine 131. ATP is bound at residue 182–183; the sequence is NR.

It belongs to the NifH/BchL/ChlL family. Homodimer. Protochlorophyllide reductase is composed of three subunits; BchL, BchN and BchB. Requires [4Fe-4S] cluster as cofactor.

It catalyses the reaction chlorophyllide a + oxidized 2[4Fe-4S]-[ferredoxin] + 2 ADP + 2 phosphate = protochlorophyllide a + reduced 2[4Fe-4S]-[ferredoxin] + 2 ATP + 2 H2O. It functions in the pathway porphyrin-containing compound metabolism; bacteriochlorophyll biosynthesis (light-independent). Functionally, component of the dark-operative protochlorophyllide reductase (DPOR) that uses Mg-ATP and reduced ferredoxin to reduce ring D of protochlorophyllide (Pchlide) to form chlorophyllide a (Chlide). This reaction is light-independent. The L component serves as a unique electron donor to the NB-component of the complex, and binds Mg-ATP. This Chlorobium phaeobacteroides (strain DSM 266 / SMG 266 / 2430) protein is Light-independent protochlorophyllide reductase iron-sulfur ATP-binding protein.